The following is a 444-amino-acid chain: Ras-related protein RabX (444 aa).

29 to 36 (GGDVCSKN) contacts GTP. An Effector region motif is present at residues 51 to 58 (LIQVFDDY). 73 to 77 (EFSSI) provides a ligand contact to GTP. Residues 91 to 136 (ENNKNKNNNNNYNYNNNNYNNNNNNNNNNNNNNNNNNNNNNNNNNS) are disordered. Residues 95-135 (NKNNNNNYNYNNNNYNNNNNNNNNNNNNNNNNNNNNNNNNN) are compositionally biased toward low complexity. 207 to 210 (NDSN) contributes to the GTP binding site. Disordered stretches follow at residues 213–232 (TPNF…SNII) and 298–401 (LQGD…NNDL). Composition is skewed to low complexity over residues 217–232 (SDSS…SNII) and 303–399 (NNNN…TYNN). A lipid anchor (S-palmitoyl cysteine) is attached at cysteine 439. Cysteine 441 carries the cysteine methyl ester modification. Residue cysteine 441 is the site of S-geranylgeranyl cysteine attachment. Residues 442-444 (NLM) constitute a propeptide, removed in mature form.

The protein belongs to the small GTPase superfamily. Rab family.

The protein resides in the cell membrane. The polypeptide is Ras-related protein RabX (rabX) (Dictyostelium discoideum (Social amoeba)).